The chain runs to 327 residues: Pyruvate dehydrogenase E1 component subunit beta (327 aa).

Residue Glu60 coordinates thiamine diphosphate.

Heterodimer of an alpha and a beta chain. Thiamine diphosphate is required as a cofactor.

The catalysed reaction is N(6)-[(R)-lipoyl]-L-lysyl-[protein] + pyruvate + H(+) = N(6)-[(R)-S(8)-acetyldihydrolipoyl]-L-lysyl-[protein] + CO2. Functionally, the pyruvate dehydrogenase complex catalyzes the overall conversion of pyruvate to acetyl-CoA and CO(2). It contains multiple copies of three enzymatic components: pyruvate dehydrogenase (E1), dihydrolipoamide acetyltransferase (E2) and lipoamide dehydrogenase (E3). The chain is Pyruvate dehydrogenase E1 component subunit beta (pdhB) from Acholeplasma laidlawii.